A 388-amino-acid polypeptide reads, in one-letter code: MCHKMMNKFQQRLHHTTSTPLFKTCVYFSNWSVYQKKHFPQDIPIEYYTHIFYAFILIDEQTGKLKFSDEWCDLQMPQPSPNQSITGNLQQFYEMKKKNRHLKLIMSIGGWGTCHLFESVVSNDTKFDNFVNSTIEFAEKYGFDGVDIDWEYPKNSTQAAKLVELLARLRNKLNSKYIITVAAPGGSDNIEILKIQEMDKYLTFWNLMCYDFAGEGWSSKTAFHSNLFGNNGDNSLNASDVVQTYINKGVHPTKLILGMPMYGRIFHGVDRPEIGIPFTKERKSGCIEADVVDYNKFGDTFDYEDFDPRKVGALKYDSHSKQLITFDNLQCARIKASFIQSRQLGGGMWWDSAGDVSVTNDGCLVKNFVDQLGGVEVLEKSANNLHGC.

One can recognise a GH18 domain in the interval 22 to 375; it reads FKTCVYFSNW…KNFVDQLGGV (354 aa). 2 N-linked (GlcNAc...) asparagine glycosylation sites follow: asparagine 30 and asparagine 82. Residues 82–83 and 109–112 contribute to the chitin site; these read NQ and GGWG. N-linked (GlcNAc...) asparagine glycosylation is found at asparagine 123 and asparagine 132. Residue glutamate 151 is the Proton donor of the active site. Residue tyrosine 152 participates in chitin binding. The N-linked (GlcNAc...) asparagine glycan is linked to asparagine 155. Position 208–211 (208–211) interacts with chitin; it reads MCYD. A glycan (N-linked (GlcNAc...) asparagine) is linked at asparagine 237. Chitin is bound at residue tryptophan 350.

The protein belongs to the glycosyl hydrolase 18 family. Chitinase class V subfamily.

It is found in the secreted. The catalysed reaction is Random endo-hydrolysis of N-acetyl-beta-D-glucosaminide (1-&gt;4)-beta-linkages in chitin and chitodextrins.. Its function is as follows. Chitinase involved in the remodeling of chitin in the fungal cell wall. Plays a role in sporulation. In Candida albicans (strain SC5314 / ATCC MYA-2876) (Yeast), this protein is Chitinase 4 (CHT4).